We begin with the raw amino-acid sequence, 282 residues long: Homeobox protein pv.1 (282 aa).

2 stretches are compositionally biased toward basic and acidic residues: residues 17 to 26 (EEAADGKDSM) and 44 to 59 (YAKE…DVQE). The disordered stretch occupies residues 17–128 (EEAADGKDSM…HRGESPKSDL (112 aa)). Polar residues-rich tracts occupy residues 86 to 96 (WGSSDDFSSVG) and 103 to 114 (EGSPSPMRNSQE). Residues 116-128 (ETDHRGESPKSDL) show a composition bias toward basic and acidic residues. A DNA-binding region (homeobox) is located at residues 129-188 (QRHLRTAFTPQQISKLEQAFNKQRYLGASERKKLATSLRLSEIQVKTWFQNRRMKLKRQI).

In terms of tissue distribution, expressed in the ventral marginal zone of blastulae. At early gastrulation, expression begins to spread to the animal pole (ectoderm), and at stage 11.5 is expressed in a gradient across the animal cap, with levels highest in the ventral region. At the end of gastrulation, predominantly localized to the ventral and lateral regions of the closing slit blastopore. Also expressed at a low level in ventral endoderm.

It is found in the nucleus. Functionally, transcriptional repressor. Acts in a ventral signaling pathway downstream of bmp4, which suppresses dorsal mesoderm formation and leads to both ventral mesoderm and ventral ectoderm formation. Acts in the ectoderm to simultaneously specify epidermal lineages and restrict neuralization. Represses transcription of dorsal-specific genes. Binds to DNA, with preference for the target sequences 5'-TAATGC-3' and 5'-TAATTG-3'. Acts in a pathway downstream of bmp4 and fgf to negatively regulate erythroid specification. The chain is Homeobox protein pv.1 from Xenopus laevis (African clawed frog).